The following is a 706-amino-acid chain: Probable cyclic nucleotide-gated ion channel 3 (706 aa).

At 1-85 the chain is on the cytoplasmic side; sequence MMNPQRNKFV…NDSYLQSWNK (85 aa). A helical membrane pass occupies residues 86–106; that stretch reads IFLLLSVVALAFDPLFFYIPY. Residues 107–119 lie on the Extracellular side of the membrane; it reads VKPERFCLNLDKK. The chain crosses the membrane as a helical span at residues 120–140; that stretch reads LQTIACVFRTFIDAFYVVHML. The Cytoplasmic segment spans residues 141–174; sequence FQFHTGFITPSSSGFGRGELNEKHKDIALRYLGS. The chain crosses the membrane as a helical span at residues 175-195; the sequence is YFLIDLLSILPIPQVVVLAIV. Over 196 to 208 the chain is Extracellular; sequence PRMRRPASLVAKE. A helical transmembrane segment spans residues 209–229; it reads LLKWVIFCQYVPRIARIYPLF. The Cytoplasmic portion of the chain corresponds to 230–247; it reads KEVTRTSGLVTETAWAGA. A helical membrane pass occupies residues 248-268; the sequence is ALNLFLYMLASHVFGSFWYLI. The Extracellular segment spans residues 269–371; the sequence is SIERKDRCWR…QNLKTSAFEG (103 aa). A helical transmembrane segment spans residues 372-392; the sequence is EIIFAIVICISGLVLFALLIG. Residues 393-706 lie on the Cytoplasmic side of the membrane; the sequence is NMQKYLQSTT…ADPEFPMDET (314 aa). A nucleoside 3',5'-cyclic phosphate-binding positions include 477–600 and Asp548; that span reads WFQA…KQLR. Positions 591 to 606 are calmodulin-binding; sequence YRRLHSKQLRHMFRFY. In terms of domain architecture, IQ spans 611–640; the sequence is QTWAACFIQAAWKRHCRRKLSKALREEEGK.

It belongs to the cyclic nucleotide-gated cation channel (TC 1.A.1.5) family. Homotetramer or heterotetramer.

The protein resides in the cell membrane. In terms of biological role, probable cyclic nucleotide-gated ion channel. The sequence is that of Probable cyclic nucleotide-gated ion channel 3 (CNGC3) from Arabidopsis thaliana (Mouse-ear cress).